We begin with the raw amino-acid sequence, 798 residues long: MRVIRAAAALNSSCAASSRQGARYASLACRTALTSSPLAPCYSARLSGLRYFTKTHAPRAASAAEAALKQAKELAAANMTPEAAAARMTPEEAKRLSMVRNIGIAAHIDSGKTTVSERILFYTGRTKAIHEVRGRDGVGAKMDSMELERERGITIQSAATFADWKKVENGVEETYHFNLIDTPGHIDFTIEVERAMRVLDGAVMVLCAVSGVQSQTITVDRQMKRYNVPRISFVNKMDRMGSNPFKAVEMINSKLKIPAAAVQIPIGSEKEFEGVVDLIHMRAIRNDGLRGINVRVSNTIPENLKELAEQKRQELIEKLADVDDEIAEMFLEEKTPTPEQIKAAIRRATIGLKFTPVLMGSALADKSVQPMLDAVCDYLPNPGNVDNMALDRSKKEEPVKLLPYDSLPFVGLAFKLEENPYGQLTYIRVYQGTLKKGQYLFNARNDKKVRIPRIVRMHSNEMEDVNEIGAGEICAVFGVECASGDTFTDGRLPYGMSSMFVPDSVMSLSIKPKRSSDADAFSKAMNRFMREDPTFRLHVDEESEETIISGMGELHLDIYVERLRREYKVDCETGKPRVAYRETISKRAEYDFLLKRQSGGPGDYARVVGWIEPNVENAEGNKFETKVVGGNIPDKYLAACGKGFEEACIKGPLLGHKVIGAHMVVTDGATHVTDSSDYAFNLATQMAFRKAFPDAGGAVLEPLMKTTITAPAEFQGNILMLMNKRGSIVDTEVGADEFTMIAECSLNAMFGFSTHLRAATQGKGEFSMEFSHYAPAPPHLQKELVAQYEKELEAKRSK.

The transit peptide at 1–24 (MRVIRAAAALNSSCAASSRQGARY) directs the protein to the mitochondrion. Residues 97–383 (SMVRNIGIAA…AVCDYLPNPG (287 aa)) form the tr-type G domain. GTP contacts are provided by residues 106–113 (AHIDSGKT), 181–185 (DTPGH), and 235–238 (NKMD).

The protein belongs to the TRAFAC class translation factor GTPase superfamily. Classic translation factor GTPase family. EF-G/EF-2 subfamily.

It localises to the mitochondrion. It participates in protein biosynthesis; polypeptide chain elongation. Functionally, mitochondrial GTPase that catalyzes the GTP-dependent ribosomal translocation step during translation elongation. During this step, the ribosome changes from the pre-translocational (PRE) to the post-translocational (POST) state as the newly formed A-site-bound peptidyl-tRNA and P-site-bound deacylated tRNA move to the P and E sites, respectively. Catalyzes the coordinated movement of the two tRNA molecules, the mRNA and conformational changes in the ribosome. The chain is Elongation factor G, mitochondrial from Chaetomium globosum (strain ATCC 6205 / CBS 148.51 / DSM 1962 / NBRC 6347 / NRRL 1970) (Soil fungus).